Consider the following 263-residue polypeptide: Neurovirulence factor ICP34.5 (263 aa).

Residues 1-14 (MARRRRHRGPRRPR) are compositionally biased toward basic residues. The required for nucleolar localization stretch occupies residues 1–16 (MARRRRHRGPRRPRPP). Disordered regions lie at residues 1-128 (MARR…PFRL) and 149-190 (RRAG…PATP). Polar residues predominate over residues 24-35 (TAQSQVTSTPNS). Residues 45–58 (AAPPPPPASGPPPS) are compositionally biased toward pro residues. Residues 73 to 83 (ASDDDDDDDWP) show a composition bias toward acidic residues. 2 stretches are compositionally biased toward pro residues: residues 84–93 (DSPPPEPAPE) and 119–128 (SHPPSRPFRL). Positions 128–137 (LPPRLALRLR) match the Nuclear export signal motif. Tandem repeats lie at residues 161–163 (ATP), 164–166 (ATP), 167–169 (ATP), 170–172 (ATP), 173–175 (ATP), 176–178 (ATP), 179–181 (ATP), 182–184 (ATP), 185–187 (ATP), and 188–190 (ATP). Residues 161 to 190 (ATPATPATPATPATPATPATPATPATPATP) are 10 X 3 AA tandem repeats of A-T-P. A compositionally biased stretch (low complexity) spans 164–190 (ATPATPATPATPATPATPATPATPATP). An interaction with host PPP1CA region spans residues 190 to 203 (PARVRFSPHVRVRH). Residues 205-263 (VVWASAARLARRGSWARERADRARFRRRVAEAEAVIGPCLGPEARARALARGAGPANSV) are important for interferon resistance. Positions 215 to 233 (RRGSWARERADRARFRRRV) match the Bipartite nuclear localization signal motif. The interaction with host EIF2S1/EIF-2ALPHA stretch occupies residues 233–248 (VAEAEAVIGPCLGPEA).

It belongs to the PPP1R15 family. In terms of assembly, interacts with host PPP1CA; this interaction to forms a high-molecular-weight complex that dephosphorylates EIF2S1/eIF-2alpha. Interacts with host EIF2S1/eIF-2alpha; this interaction is crucial for the specific dephosphorylation of EIF2S1/eIF-2alpha by PPP1CA. Binds to proliferating cell nuclear antigen (PCNA), which may release host cells from growth arrest and facilitate viral replication. Interacts (via N-terminus) with host C1QBP; this interaction allows C1QBP to be recruited to the inner nuclear membrane by ICP34.5. Interacts with host PRKCA. Interacts with protein UL31. Interacts with host STING/TMEM173; this interaction inhibits the intracellular DNA sensing pathway. Interacts with host BECN1; this interaction modulates host autophagy.

It localises to the host cytoplasm. The protein localises to the host nucleus. It is found in the host nucleolus. The protein resides in the virion. Inhibits the establishment of the immune response and of the integrated stress response (ISR) in the infected cell. Plays essential roles in viral nuclear egress to mediate capsid transit across the nuclear membrane. Facilitates nuclear egress cooperatively with host C1QBP and protein kinase C/PKC to induce lamin A/C phosphorylation and subsequent reorganization. In turn, lamina disassembles and nuclear egress occurs. Recruits the serine/threonine protein phosphatase PPP1CA/PP1-alpha to dephosphorylate the translation initiation factor EIF2S1/eIF-2alpha, thereby couteracting the host shutoff of protein synthesis involving double-stranded RNA-dependent protein kinase EIF2AK2/PKR. In turn, controls host IRF3 activation and subsequently inhibits host interferon response. Controls the DNA sensing pathway by interacting with and inhibiting host STING/TMEM173. Also down-modulates the host MHC class II proteins cell surface expression. Acts as a neurovirulence factor that has a profound effect on the growth of the virus in central nervous system tissue, by interacting with host BECN1 and thereby antagonizing the host autophagy response. This Human herpesvirus 1 (strain F) (HHV-1) protein is Neurovirulence factor ICP34.5 (RL1).